The following is a 380-amino-acid chain: Protein Wnt-5a (380 aa).

A signal peptide spans 1–40 (MRKNLWTFQFGGEASGLVGSAMVSQHFVVLLMSLYCLTQS). A disulfide bridge connects residues cysteine 104 and cysteine 115. Asparagine 114 and asparagine 120 each carry an N-linked (GlcNAc...) asparagine glycan. 10 disulfide bridges follow: cysteine 154/cysteine 162, cysteine 164/cysteine 182, cysteine 238/cysteine 252, cysteine 240/cysteine 247, cysteine 309/cysteine 340, cysteine 325/cysteine 335, cysteine 339/cysteine 379, cysteine 355/cysteine 370, cysteine 357/cysteine 367, and cysteine 362/cysteine 363. Serine 244 carries O-palmitoleoyl serine; by PORCN lipidation. 2 N-linked (GlcNAc...) asparagine glycosylation sites follow: asparagine 312 and asparagine 326.

This sequence belongs to the Wnt family. Palmitoleoylation is required for efficient binding to frizzled receptors. Depalmitoleoylation leads to Wnt signaling pathway inhibition. Found primarily in ectoderm with lower levels of expression in mesoderm. Detected in the head and tail with lower expression in the middle of the embryo. No expression was found in the notochord.

It is found in the secreted. The protein localises to the extracellular space. The protein resides in the extracellular matrix. Ligand for members of the frizzled family of seven transmembrane receptors. Can activate or inhibit canonical Wnt signaling, depending on receptor context. Plays a role in normal embryonic development. This is Protein Wnt-5a (wnt5a) from Xenopus laevis (African clawed frog).